Reading from the N-terminus, the 330-residue chain is Peroxidase N1 (330 aa).

A signal peptide spans 1-29 (MEYYHHSINKMAMFMVILVLAIDVTMVLG). Q30 is modified (pyrrolidone carboxylic acid). Intrachain disulfides connect C41–C117, C74–C79, C123–C326, and C201–C233. H72 functions as the Proton acceptor in the catalytic mechanism. Residues D73, V76, G78, D80, and S82 each coordinate Ca(2+). P164 contributes to the substrate binding site. Position 194 (H194) interacts with heme b. T195 lines the Ca(2+) pocket. N212 carries N-linked (GlcNAc...) asparagine glycosylation. The Ca(2+) site is built by D246 and D254.

It belongs to the peroxidase family. Classical plant (class III) peroxidase subfamily. Ca(2+) is required as a cofactor. Heme b serves as cofactor. In terms of tissue distribution, expressed at a high level in roots and at a trace level in lower leaves. Not expressed in upper leaves, stems, flowers, seeds and shoot apices.

The protein localises to the secreted. It catalyses the reaction 2 a phenolic donor + H2O2 = 2 a phenolic radical donor + 2 H2O. Functionally, removal of H(2)O(2), oxidation of toxic reductants, biosynthesis and degradation of lignin, suberization, auxin catabolism, response to environmental stresses such as wounding, pathogen attack and oxidative stress. These functions might be dependent on each isozyme/isoform in each plant tissue. Can use NADH, NADPH and monolignols as substrates. The polypeptide is Peroxidase N1 (Nicotiana tabacum (Common tobacco)).